The following is a 122-amino-acid chain: Large ribosomal subunit protein uL14c (122 aa).

It belongs to the universal ribosomal protein uL14 family. Part of the 50S ribosomal subunit.

It localises to the plastid. It is found in the chloroplast. Binds to 23S rRNA. In Platanus occidentalis (Sycamore), this protein is Large ribosomal subunit protein uL14c.